We begin with the raw amino-acid sequence, 216 residues long: Probable transaldolase (216 aa).

Catalysis depends on Lys83, which acts as the Schiff-base intermediate with substrate.

It belongs to the transaldolase family. Type 3B subfamily.

The protein localises to the cytoplasm. It carries out the reaction D-sedoheptulose 7-phosphate + D-glyceraldehyde 3-phosphate = D-erythrose 4-phosphate + beta-D-fructose 6-phosphate. It functions in the pathway carbohydrate degradation; pentose phosphate pathway; D-glyceraldehyde 3-phosphate and beta-D-fructose 6-phosphate from D-ribose 5-phosphate and D-xylulose 5-phosphate (non-oxidative stage): step 2/3. Its function is as follows. Transaldolase is important for the balance of metabolites in the pentose-phosphate pathway. This Desulforamulus reducens (strain ATCC BAA-1160 / DSM 100696 / MI-1) (Desulfotomaculum reducens) protein is Probable transaldolase.